The sequence spans 87 residues: Small ribosomal subunit protein uS17 (87 aa).

This sequence belongs to the universal ribosomal protein uS17 family. In terms of assembly, part of the 30S ribosomal subunit.

In terms of biological role, one of the primary rRNA binding proteins, it binds specifically to the 5'-end of 16S ribosomal RNA. This is Small ribosomal subunit protein uS17 from Staphylococcus haemolyticus (strain JCSC1435).